Consider the following 314-residue polypeptide: ATP synthase gamma chain (314 aa).

It belongs to the ATPase gamma chain family. F-type ATPases have 2 components, CF(1) - the catalytic core - and CF(0) - the membrane proton channel. CF(1) has five subunits: alpha(3), beta(3), gamma(1), delta(1), epsilon(1). CF(0) has three main subunits: a, b and c.

The protein resides in the cell membrane. Produces ATP from ADP in the presence of a proton gradient across the membrane. The gamma chain is believed to be important in regulating ATPase activity and the flow of protons through the CF(0) complex. The chain is ATP synthase gamma chain from Lactiplantibacillus plantarum (strain ATCC BAA-793 / NCIMB 8826 / WCFS1) (Lactobacillus plantarum).